The sequence spans 223 residues: Uracil-DNA glycosylase (223 aa).

The active-site Proton acceptor is the D61.

It belongs to the uracil-DNA glycosylase (UDG) superfamily. UNG family.

The protein localises to the cytoplasm. It catalyses the reaction Hydrolyzes single-stranded DNA or mismatched double-stranded DNA and polynucleotides, releasing free uracil.. Its function is as follows. Excises uracil residues from the DNA which can arise as a result of misincorporation of dUMP residues by DNA polymerase or due to deamination of cytosine. The chain is Uracil-DNA glycosylase from Haemophilus ducreyi (strain 35000HP / ATCC 700724).